Reading from the N-terminus, the 613-residue chain is Serine/threonine-protein kinase pkpA (613 aa).

The Protein kinase domain maps to 17-269 (SKLNTVLGKG…AQEILEHRFL (253 aa)). ATP contacts are provided by residues 23 to 31 (LGKGAYKVV) and Lys50. Catalysis depends on Asp140, which acts as the Proton acceptor. Disordered stretches follow at residues 424–475 (LQPQ…STML) and 589–613 (VTQR…QELM). A compositionally biased stretch (pro residues) spans 427 to 441 (QPQPQPQPQPQPQPQ). Over residues 442-475 (PQFQLQPQLQYLSPQSTTSPGPTSDDNSTNSTML) the composition is skewed to low complexity. Over residues 592–602 (RGLQGTRSGAS) the composition is skewed to polar residues.

It belongs to the protein kinase superfamily. Ser/Thr protein kinase family.

The enzyme catalyses L-seryl-[protein] + ATP = O-phospho-L-seryl-[protein] + ADP + H(+). It catalyses the reaction L-threonyl-[protein] + ATP = O-phospho-L-threonyl-[protein] + ADP + H(+). Its function is as follows. Serine/threonine protein kinase that probably participates as an intermediate in an intracellular system controlling nuclear proliferation. This chain is Serine/threonine-protein kinase pkpA (pkpA), found in Phycomyces blakesleeanus (strain ATCC 8743b / DSM 1359 / FGSC 10004 / NBRC 33097 / NRRL 1555).